Here is a 315-residue protein sequence, read N- to C-terminus: Homoserine kinase (315 aa).

An ATP-binding site is contributed by 97-107 (PPARGLGSSAT).

Belongs to the GHMP kinase family. Homoserine kinase subfamily.

The protein resides in the cytoplasm. The catalysed reaction is L-homoserine + ATP = O-phospho-L-homoserine + ADP + H(+). It functions in the pathway amino-acid biosynthesis; L-threonine biosynthesis; L-threonine from L-aspartate: step 4/5. Functionally, catalyzes the ATP-dependent phosphorylation of L-homoserine to L-homoserine phosphate. The sequence is that of Homoserine kinase from Synechococcus sp. (strain CC9311).